We begin with the raw amino-acid sequence, 152 residues long: MGLEKSFILFSLLVLVLGWVQPSLGVESRESSADKFKRQHMDPESPSKSSPTYCNQMMKRQGMTKGSCKPVNTFVHEPLEDVQAICSQGQVTCKNGRNNCHKSSSTLHITECRLKGSSKYPNCEYTTTDSQKHIIIACEGNPLVPVHYDDTV.

A signal peptide spans 1–25; the sequence is MGLEKSFILFSLLVLVLGWVQPSLG. Basic and acidic residues predominate over residues 31-45; that stretch reads SSADKFKRQHMDPES. A disordered region spans residues 31 to 53; that stretch reads SSADKFKRQHMDPESPSKSSPTY. Substrate is bound by residues Lys-35 and Arg-38. The active-site Proton acceptor is the His-40. 4 disulfide bridges follow: Cys-54–Cys-112, Cys-68–Cys-123, Cys-86–Cys-138, and Cys-93–Cys-100. Substrate contacts are provided by residues 69–73, Lys-94, and Arg-113; that span reads KPVNT. His-147 functions as the Proton donor in the catalytic mechanism.

It belongs to the pancreatic ribonuclease family. As to quaternary structure, monomer.

Its subcellular location is the secreted. The enzyme catalyses an [RNA] containing cytidine + H2O = an [RNA]-3'-cytidine-3'-phosphate + a 5'-hydroxy-ribonucleotide-3'-[RNA].. The catalysed reaction is an [RNA] containing uridine + H2O = an [RNA]-3'-uridine-3'-phosphate + a 5'-hydroxy-ribonucleotide-3'-[RNA].. Endonuclease that catalyzes the cleavage of RNA on the 3' side of pyrimidine nucleotides. Acts on single-stranded and double-stranded RNA. The chain is Ribonuclease pancreatic beta-type from Rattus exulans (Polynesian rat).